A 287-amino-acid polypeptide reads, in one-letter code: ATP synthase gamma chain (287 aa).

Belongs to the ATPase gamma chain family. As to quaternary structure, F-type ATPases have 2 components, CF(1) - the catalytic core - and CF(0) - the membrane proton channel. CF(1) has five subunits: alpha(3), beta(3), gamma(1), delta(1), epsilon(1). CF(0) has three main subunits: a, b and c.

The protein localises to the cell inner membrane. Produces ATP from ADP in the presence of a proton gradient across the membrane. The gamma chain is believed to be important in regulating ATPase activity and the flow of protons through the CF(0) complex. The sequence is that of ATP synthase gamma chain from Shigella sonnei (strain Ss046).